We begin with the raw amino-acid sequence, 238 residues long: Protein lifeguard 4 (238 aa).

Topologically, residues 1–38 (MADTDPGYPRSSIEDDFNYGSCVASASVHIRMAFLRKV) are cytoplasmic. Residues 39-59 (YSILSLQVLLTTVTSALFLYF) form a helical membrane-spanning segment. Residues 60 to 68 (QALRTFVHE) lie on the Lumenal side of the membrane. The chain crosses the membrane as a helical span at residues 69–89 (SPALIVVFALGSLGLIFALTL). Topologically, residues 90–97 (HRHTHPLN) are cytoplasmic. Residues 98-118 (LYLLFAFTLSESLAVAAVVTF) form a helical membrane-spanning segment. At 119–120 (YD) the chain is on the lumenal side. The helical transmembrane segment at 121–141 (VYLVLQAFIMTTAVFLGLTAY) threads the bilayer. Over 142–151 (TLQSKRDFTK) the chain is Cytoplasmic. A helical transmembrane segment spans residues 152-172 (FGAGLFAGLWILCLAGFLKLF). Topologically, residues 173–175 (FYS) are lumenal. A helical membrane pass occupies residues 176-196 (ETMELVLASLGALLFCGFIIY). Topologically, residues 197-208 (DTHSLMHRLSPE) are cytoplasmic. The helical intramembrane region spans 209–229 (EYVIAAISLYMDIINLFLHLL). Topologically, residues 230–238 (KFLEAVNKK) are cytoplasmic.

This sequence belongs to the BI1 family. LFG subfamily. As to quaternary structure, interacts with ITPR3.

Its subcellular location is the golgi apparatus membrane. Its function is as follows. Anti-apoptotic protein which can inhibit apoptosis induced by intrinsic and extrinsic apoptotic stimuli. Can modulate both capacitative Ca2+ entry and inositol 1,4,5-trisphosphate (IP3)-mediated Ca2+ release. This chain is Protein lifeguard 4 (Tmbim4), found in Mus musculus (Mouse).